Here is a 943-residue protein sequence, read N- to C-terminus: MHKRNGPQAPPGRGAVTARQLGLLVDFSPDGLMIPEDGINEEELEAEFLALVGGQPQALEKLKGQGPLPMEAIEKMARLCMRDLDEDEEGTDEDDVEADEDLLAELNEVLGEEQKAVEPLMPVAQPKPSGPNPGVEATLQERLTLYQSALESARQAGDSAKMRRYDRGLKTLENLLVSAKKGNIINEADIPPPVASGKGAAAGHSHTQATSQLASVSPPAPESSGTLEAPSTTTPTSAKPQLPPDPCSPLARLQSLQHEYKLAALRAKHQDDTATATRHLRIAKSFDPVLEALSRGELVDLSRLPPPPDQLSPEPPLPAAQPLTSASTLTRPEVPQPPRNLLEALEQRMERYHVAAAQAKAKGDQRKARMHERIVKQYQDAIRAHKAGRAVDVAELPVPPGFPPMQGLESAEPSQQSLVGVLETAMRLANHDEGSDDEEEETPKKQNTPAASTTQLKSSPSKAPPSGPAPAGKAAPKGTSNRAQQQLAFLEGRKKQLLQAALRAKQKNDVEGAKMHLRQAKGLEPMLEASRNGLPVDIAKVPPAPVNKDDFVLVQRPGPGLSQEAVRRYGELTKLLRQQHEMCLNHSTQFTHLGNIAETIKFEKLAEDCKRSMDTLKQAFARSLPTPAARFEQRTFSVIKVFPDLSNSDMLLFIVKGINLPTPTGLSPSDLDAFVRFDFPYPNVEEAQKDKTSVIKNTDSPEFKEQFKLCINRGHRGFRRAIQTKGIKFEVVHKGGLFKTDRVLGTAQLKLGTLETACEVHEILEVLDGRRPTGGRLEVMVRIREPLTAQQLETTTERWLVIDHIPAAMPTVTGPKAKAPLIPASSREAGNRSARPLHSLSVLAFDQERLERKILALRQARRPVPPEVAQQYQDVVQRSQWQRAQLEQGGAALRREYASHLERQLHFYTEAARRLGYDGSREAAKEALYRRNLVESELQRLRR.

T91 bears the Phosphothreonine mark. Disordered stretches follow at residues 186-250 (NEAD…CSPL) and 300-337 (DLSR…VPQP). Low complexity-rich tracts occupy residues 195–206 (ASGKGAAAGHSH) and 229–238 (APSTTTPTSA). S248 carries the phosphoserine modification. Positions 304-319 (LPPPPDQLSPEPPLPA) are enriched in pro residues. A coiled-coil region spans residues 339-385 (RNLLEALEQRMERYHVAAAQAKAKGDQRKARMHERIVKQYQDAIRAH). The interval 430-483 (NHDEGSDDEEEETPKKQNTPAASTTQLKSSPSKAPPSGPAPAGKAAPKGTSNRA) is disordered. S435 carries the phosphoserine modification. The span at 445–456 (KQNTPAASTTQL) shows a compositional bias: polar residues. Residues 469 to 478 (APAGKAAPKG) are compositionally biased toward low complexity. Residues 477 to 510 (KGTSNRAQQQLAFLEGRKKQLLQAALRAKQKNDV) are a coiled coil. One can recognise a C2 domain in the interval 630-764 (RFEQRTFSVI…ETACEVHEIL (135 aa)).

Belongs to the CC2D1 family. Highly expressed in brain, expression is enriched in the gray matter and strongest in the olfactory bulb.

Its subcellular location is the cytoplasm. The protein localises to the nucleus. It localises to the cytoskeleton. It is found in the microtubule organizing center. The protein resides in the centrosome. Transcription factor that binds specifically to the DRE (dual repressor element) and represses HTR1A gene transcription in neuronal cells. The combination of calcium and ATP specifically inactivates the binding with FRE. May play a role in the altered regulation of HTR1A associated with anxiety and major depression. Mediates HDAC-independent repression of HTR1A promoter in neuronal cell. Performs essential function in controlling functional maturation of synapses. The chain is Coiled-coil and C2 domain-containing protein 1A (Cc2d1a) from Mus musculus (Mouse).